Here is a 424-residue protein sequence, read N- to C-terminus: Glutamyl-tRNA reductase (424 aa).

Substrate contacts are provided by residues 53 to 56 (TCNR), Ser111, 116 to 118 (EPQ), and Gln122. Cys54 acts as the Nucleophile in catalysis. 191–196 (GAGEMI) contacts NADP(+).

It belongs to the glutamyl-tRNA reductase family. Homodimer.

The enzyme catalyses (S)-4-amino-5-oxopentanoate + tRNA(Glu) + NADP(+) = L-glutamyl-tRNA(Glu) + NADPH + H(+). Its pathway is porphyrin-containing compound metabolism; protoporphyrin-IX biosynthesis; 5-aminolevulinate from L-glutamyl-tRNA(Glu): step 1/2. Functionally, catalyzes the NADPH-dependent reduction of glutamyl-tRNA(Glu) to glutamate 1-semialdehyde (GSA). In Bordetella bronchiseptica (strain ATCC BAA-588 / NCTC 13252 / RB50) (Alcaligenes bronchisepticus), this protein is Glutamyl-tRNA reductase.